The following is a 446-amino-acid chain: Indoleacetamide hydrolase (446 aa).

Catalysis depends on charge relay system residues lysine 71 and serine 146. The Acyl-ester intermediate role is filled by serine 170.

The protein belongs to the amidase family.

It participates in plant hormone metabolism; auxin biosynthesis. Hydrolyzes indole-3-acetamide (IAM) into indole-3-acetic acid (IAA). This Pseudomonas syringae pv. syringae protein is Indoleacetamide hydrolase (iaaH).